The chain runs to 207 residues: Large ribosomal subunit protein uL4 (207 aa).

The disordered stretch occupies residues 54 to 74 (RSDVRGGGKKPYRQKGTGNAR).

The protein belongs to the universal ribosomal protein uL4 family. As to quaternary structure, part of the 50S ribosomal subunit.

One of the primary rRNA binding proteins, this protein initially binds near the 5'-end of the 23S rRNA. It is important during the early stages of 50S assembly. It makes multiple contacts with different domains of the 23S rRNA in the assembled 50S subunit and ribosome. Its function is as follows. Forms part of the polypeptide exit tunnel. This is Large ribosomal subunit protein uL4 from Magnetococcus marinus (strain ATCC BAA-1437 / JCM 17883 / MC-1).